A 428-amino-acid polypeptide reads, in one-letter code: MKNWKTLLLGIAMIANTSFAAPQVVDKVAAVVNNGVVLESDVDGLMQSVKLNAAQARQQLPDDATLRHQIMERLIMDQIILQMGQKMGVKISDEQLDQAIANIAKQNNMTLNQMRSRLAYDGLNYNTYRNQIRKEMIISEVRNNEVRRRITILPQEVESLAQQVGNQNDASTELNLSHILIPLPENPTSDQVNEAESQARAIVDQARNGADFGKLAIAHSADQQALNGGQMGWGRIQELPGIFAQALSTAKKGDIVGPIRSGVGFHILKVNDLRGESKNISVTEVHARHILLKPSPIMTDEQARVKLEQIAADIKSGKTTFAAAAKEFSQDPGSANQGGDLGWATADIFDPAFRDALTRLNKGQMSAPVHSSFGWHLIELLDTRNVDKTDAAQKDRAYRMLMNRKFSEEAASWMQEQRASAYVKILSN.

The N-terminal stretch at 1–20 (MKNWKTLLLGIAMIANTSFA) is a signal peptide. 2 PpiC domains span residues 171–272 (STEL…KVND) and 282–382 (VTEV…ELLD).

It localises to the periplasm. The enzyme catalyses [protein]-peptidylproline (omega=180) = [protein]-peptidylproline (omega=0). Its function is as follows. Chaperone involved in the correct folding and assembly of outer membrane proteins. Recognizes specific patterns of aromatic residues and the orientation of their side chains, which are found more frequently in integral outer membrane proteins. May act in both early periplasmic and late outer membrane-associated steps of protein maturation. The protein is Chaperone SurA of Shigella dysenteriae serotype 1 (strain Sd197).